The chain runs to 141 residues: Large ribosomal subunit protein uL16 (141 aa).

The protein belongs to the universal ribosomal protein uL16 family. Part of the 50S ribosomal subunit.

Functionally, binds 23S rRNA and is also seen to make contacts with the A and possibly P site tRNAs. The chain is Large ribosomal subunit protein uL16 from Hydrogenobaculum sp. (strain Y04AAS1).